Here is a 744-residue protein sequence, read N- to C-terminus: Glucosamine inositolphosphorylceramide transferase 1 (744 aa).

3 consecutive transmembrane segments (helical) span residues Phe-31–Val-51, Ser-378–Val-398, and Leu-460–Leu-480. Substrate is bound by residues Asn-534, Asn-558–Arg-563, Asp-579–Asp-581, Arg-609, and Phe-665–Asp-669. Asp-581 is a Mn(2+) binding site. The cysteines at positions 667 and 718 are disulfide-linked. The active site involves Asp-669.

Belongs to the glycosyltransferase 64 family. Requires Mn(2+) as cofactor. Highly expressed in almost all tissues.

It is found in the membrane. The protein operates within sphingolipid metabolism. In terms of biological role, essential protein. Glycosyltransferase that mediates the glycosylation of glycosylinositol phosphorylceramides (GIPCs), the major sphingolipids in the plasma membrane; acts as a HexN(Ac)-specific GIPC sugar transferase. Responsible for the glycosylation of a subgroup of GIPCs found in seeds and pollen that contain GlcNAc and GlcN (GlcN(Ac)). Maybe involved in the maintenance of cell-cell adhesion. This Oryza sativa subsp. japonica (Rice) protein is Glucosamine inositolphosphorylceramide transferase 1.